The chain runs to 162 residues: Caveolin-2 (162 aa).

The Cytoplasmic segment spans residues 1–86; the sequence is MGLETEKADV…FEISKYVMYK (86 aa). A Phosphotyrosine; by SRC modification is found at tyrosine 19. Serine 20 bears the Phosphoserine mark. Tyrosine 27 is modified (phosphotyrosine; by SRC). Serine 36 carries the post-translational modification Phosphoserine. The helical intramembrane region spans 87 to 107; that stretch reads FLTVFLAIPLAFAAGILFATL. Residues 108-162 lie on the Cytoplasmic side of the membrane; it reads SCLHIWIIMPFVKTCLMVLPSVQTIWKSVTDVIIAPLCTSVGRSLSSISLQLSHD.

The protein belongs to the caveolin family. In terms of assembly, monomer or homodimer. Interacts with CAV1; the interaction forms a stable heterooligomeric complex that is required for targeting to lipid rafts and for caveolae formation. Tyrosine phosphorylated forms do not form heterooligomers with the Tyr-19-phosphorylated form existing as a monomer or dimer, and the Tyr-27-form as a monomer only. Interacts (tyrosine phosphorylated form) with the SH2 domain-containing proteins, RASA1, NCK1 and SRC. Interacts (tyrosine phosphorylated form) with INSR, the interaction (Tyr-27-phosphorylated form) is increased on insulin stimulation. Interacts (Tyr-19 phosphorylated form) with MAPK1 (phosphorylated form); the interaction, promoted by insulin, leads to nuclear location and MAPK1 activation. Interacts with STAT3; the interaction is increased on insulin-induced tyrosine phosphorylation leading to STAT activation. Post-translationally, phosphorylated on serine and tyrosine residues. Phosphorylation on Ser-36 appears to modulate mitosis in endothelial cells. Phosphorylation on both Tyr-19 and Tyr-27 is required for insulin-induced 'Ser-727' phosphorylation of STAT3 and its activation. Phosphorylation on Tyr-19 is required for insulin-induced phosphorylation of MAPK1 and DNA binding of STAT3. Tyrosine phosphorylation is induced by both EGF and insulin.

The protein resides in the nucleus. The protein localises to the cytoplasm. Its subcellular location is the golgi apparatus membrane. It is found in the cell membrane. It localises to the membrane. The protein resides in the caveola. Its function is as follows. May act as a scaffolding protein within caveolar membranes. Interacts directly with G-protein alpha subunits and can functionally regulate their activity. Acts as an accessory protein in conjunction with CAV1 in targeting to lipid rafts and driving caveolae formation. The Ser-36 phosphorylated form has a role in modulating mitosis in endothelial cells. Positive regulator of cellular mitogenesis of the MAPK signaling pathway. Required for the insulin-stimulated nuclear translocation and activation of MAPK1 and STAT3, and the subsequent regulation of cell cycle progression. The protein is Caveolin-2 (CAV2) of Eulemur macaco macaco (Black lemur).